A 353-amino-acid polypeptide reads, in one-letter code: GDP-mannose transporter (353 aa).

Residues 1–31 (MGLLLSYLFGYIFYSVNKKFHIMEKFGASNS) lie on the Cytoplasmic side of the membrane. A helical membrane pass occupies residues 32 to 52 (IVNNGPVSIFAYCASSILMTV). The Lumenal portion of the chain corresponds to 53-66 (TNKFVVGAYEFNLN). Residues 67 to 87 (FFLLAVQAAVCLVTIATLKGL) traverse the membrane as a helical segment. Topologically, residues 88 to 102 (GIITYRQFNKDEAKK) are cytoplasmic. The helical transmembrane segment at 103–122 (WFPIAFLLVLMIYTSSKALQ) threads the bilayer. Residues 123–125 (YLS) are Lumenal-facing. The helical transmembrane segment at 126–148 (IPVYTIFKNLTIILIAYGEVIWF) threads the bilayer. The Cytoplasmic segment spans residues 149–154 (GGKVTT). Residues 155-172 (MALGSFILMVLSSVIAYY) form a helical membrane-spanning segment. At 173 to 187 (GDTAETGEKTAEMHL) the chain is on the lumenal side. Residues 188–208 (LYLGYAWMFTNCFSSAAFVLI) traverse the membrane as a helical segment. Over 209–227 (MRKRIKLTNFKDFDTMYYN) the chain is Cytoplasmic. The chain crosses the membrane as a helical span at residues 228-248 (NLLSLPLLLVFSFLFEDWSSV). Over 249–262 (NLNKNFPPDNRNTT) the chain is Lumenal. Asparagine 260 carries an N-linked (GlcNAc...) asparagine glycan. The chain crosses the membrane as a helical span at residues 263–283 (IFVMILSGASSVGISYCSAWC). Residues 284–290 (VRVTSST) lie on the Cytoplasmic side of the membrane. A helical membrane pass occupies residues 291–313 (TYSMVGALNKLPIALSGLVFFNA). At 314 to 316 (AVN) the chain is on the lumenal side. Residues 317-336 (FWSVSSIFVGFLAGVFYAVA) traverse the membrane as a helical segment. The Cytoplasmic portion of the chain corresponds to 337-353 (KQKQQKENAQQLPVANK).

This sequence belongs to the TPT transporter family. SLC35D subfamily. As to quaternary structure, homooligomer.

The protein resides in the golgi apparatus membrane. It is found in the cytoplasmic vesicle membrane. It localises to the endoplasmic reticulum membrane. In terms of biological role, involved in the import of GDP-mannose from the cytoplasm into the Golgi lumen. This is GDP-mannose transporter (VRG4) from Meyerozyma guilliermondii (strain ATCC 6260 / CBS 566 / DSM 6381 / JCM 1539 / NBRC 10279 / NRRL Y-324) (Yeast).